We begin with the raw amino-acid sequence, 409 residues long: Multifunctional CCA protein (409 aa).

ATP contacts are provided by Gly8 and Arg11. 2 residues coordinate CTP: Gly8 and Arg11. The Mg(2+) site is built by Asp21 and Asp23. Positions 91, 137, and 140 each coordinate ATP. Residues Arg91, Arg137, and Arg140 each coordinate CTP. In terms of domain architecture, HD spans 228 to 329 (TGAHTLSVLL…LELLQSFDVF (102 aa)).

It belongs to the tRNA nucleotidyltransferase/poly(A) polymerase family. Bacterial CCA-adding enzyme type 1 subfamily. In terms of assembly, monomer. Can also form homodimers and oligomers. The cofactor is Mg(2+). Requires Ni(2+) as cofactor.

The enzyme catalyses a tRNA precursor + 2 CTP + ATP = a tRNA with a 3' CCA end + 3 diphosphate. The catalysed reaction is a tRNA with a 3' CCA end + 2 CTP + ATP = a tRNA with a 3' CCACCA end + 3 diphosphate. In terms of biological role, catalyzes the addition and repair of the essential 3'-terminal CCA sequence in tRNAs without using a nucleic acid template. Adds these three nucleotides in the order of C, C, and A to the tRNA nucleotide-73, using CTP and ATP as substrates and producing inorganic pyrophosphate. tRNA 3'-terminal CCA addition is required both for tRNA processing and repair. Also involved in tRNA surveillance by mediating tandem CCA addition to generate a CCACCA at the 3' terminus of unstable tRNAs. While stable tRNAs receive only 3'-terminal CCA, unstable tRNAs are marked with CCACCA and rapidly degraded. This is Multifunctional CCA protein from Pseudomonas fluorescens (strain ATCC BAA-477 / NRRL B-23932 / Pf-5).